Consider the following 417-residue polypeptide: NADH-quinone oxidoreductase subunit D (417 aa).

The protein belongs to the complex I 49 kDa subunit family. As to quaternary structure, NDH-1 is composed of 14 different subunits. Subunits NuoB, C, D, E, F, and G constitute the peripheral sector of the complex.

Its subcellular location is the cell inner membrane. The enzyme catalyses a quinone + NADH + 5 H(+)(in) = a quinol + NAD(+) + 4 H(+)(out). Its function is as follows. NDH-1 shuttles electrons from NADH, via FMN and iron-sulfur (Fe-S) centers, to quinones in the respiratory chain. The immediate electron acceptor for the enzyme in this species is believed to be ubiquinone. Couples the redox reaction to proton translocation (for every two electrons transferred, four hydrogen ions are translocated across the cytoplasmic membrane), and thus conserves the redox energy in a proton gradient. The protein is NADH-quinone oxidoreductase subunit D of Coxiella burnetii (strain RSA 331 / Henzerling II).